The following is a 320-amino-acid chain: Malate dehydrogenase (320 aa).

NAD(+) contacts are provided by residues 10 to 15 (GSGMIG) and Asp34. Substrate is bound by residues Arg83 and Arg89. NAD(+)-binding positions include Asn96 and 119–121 (ITN). The substrate site is built by Asn121 and Arg152. The active-site Proton acceptor is His176.

This sequence belongs to the LDH/MDH superfamily. MDH type 3 family.

It carries out the reaction (S)-malate + NAD(+) = oxaloacetate + NADH + H(+). In terms of biological role, catalyzes the reversible oxidation of malate to oxaloacetate. This is Malate dehydrogenase from Rhizobium rhizogenes (strain K84 / ATCC BAA-868) (Agrobacterium radiobacter).